A 357-amino-acid polypeptide reads, in one-letter code: Isopentenyl-diphosphate delta-isomerase (357 aa).

12 to 13 contacts substrate; the sequence is RK. FMN contacts are provided by residues Ser70, 71–73, Ser101, and Asn130; that span reads SMT. 101–103 contributes to the substrate binding site; the sequence is SMR. Gln165 is a binding site for substrate. Position 166 (Glu166) interacts with Mg(2+). FMN is bound by residues Lys197 and 310 to 311; that span reads AR.

This sequence belongs to the IPP isomerase type 2 family. Homooctamer. Dimer of tetramers. The cofactor is FMN. Requires NADPH as cofactor. It depends on Mg(2+) as a cofactor.

The protein resides in the cytoplasm. The enzyme catalyses isopentenyl diphosphate = dimethylallyl diphosphate. Its function is as follows. Involved in the biosynthesis of isoprenoids. Catalyzes the 1,3-allylic rearrangement of the homoallylic substrate isopentenyl (IPP) to its allylic isomer, dimethylallyl diphosphate (DMAPP). This Pelodictyon phaeoclathratiforme (strain DSM 5477 / BU-1) protein is Isopentenyl-diphosphate delta-isomerase.